The following is a 103-amino-acid chain: Integration host factor subunit beta (103 aa).

This sequence belongs to the bacterial histone-like protein family. Heterodimer of an alpha and a beta chain.

Its function is as follows. This protein is one of the two subunits of integration host factor, a specific DNA-binding protein that functions in genetic recombination as well as in transcriptional and translational control. In Rhizobium meliloti (strain 1021) (Ensifer meliloti), this protein is Integration host factor subunit beta.